A 72-amino-acid polypeptide reads, in one-letter code: uncharacterized protein (72 aa).

The tract at residues 52 to 72 is disordered; it reads KGGRQRDEAVGVEELCKQHKE. Over residues 55–72 the composition is skewed to basic and acidic residues; it reads RQRDEAVGVEELCKQHKE.

It belongs to the YiiE family.

This is an uncharacterized protein from Escherichia coli O6:H1 (strain CFT073 / ATCC 700928 / UPEC).